The following is an 802-amino-acid chain: Copper-exporting P-type ATPase (802 aa).

2 HMA domains span residues 5 to 71 (KEIA…YHVV) and 73 to 139 (EKAE…YKLK). Cu(+)-binding residues include Cys16, Cys19, Cys84, and Cys87. 6 helical membrane-spanning segments follow: residues 162 to 181 (LIFS…SHFT), 196 to 218 (WMQF…VGAY), 230 to 249 (VLVA…LTFQ), 259 to 278 (GLYY…GKLF), 412 to 434 (ISGI…WYLW), and 447 to 469 (FIAV…SIMA). Asp499 (4-aspartylphosphate intermediate) is an active-site residue. The Mg(2+) site is built by Asp698 and Asp702. A run of 2 helical transmembrane segments spans residues 756 to 775 (LFWA…LGFL) and 779 to 796 (IAGA…LNAL).

Belongs to the cation transport ATPase (P-type) (TC 3.A.3) family. Type IB subfamily. Monomer at sub-stoichiometric copper concentrations. Homodimer at higher copper concentrations. Forms a heterodimer (electrostatic interactions) with CopZ during the transfer of Cu(+).

It localises to the cell membrane. The catalysed reaction is Cu(+)(in) + ATP + H2O = Cu(+)(out) + ADP + phosphate + H(+). Involved in copper export. This chain is Copper-exporting P-type ATPase (copA), found in Bacillus subtilis (strain 168).